Reading from the N-terminus, the 148-residue chain is METPFWKTKTLEQMSPAEWESLCDGCGKCCLSKLEDEDTGEIYWTSVGCRLFDAQTCRCSDYANRLARVPDCVGLTPQNVRTISWLPSTCAYRLVAEGRDLYWWHRLVSGSAETVHEAGISMRGRVKASETDLAEPEDYFDYMLDDEP.

This sequence belongs to the UPF0260 family.

This Mesorhizobium japonicum (strain LMG 29417 / CECT 9101 / MAFF 303099) (Mesorhizobium loti (strain MAFF 303099)) protein is UPF0260 protein mll2411.